A 412-amino-acid chain; its full sequence is 46 kDa FK506-binding nuclear protein (412 aa).

Composition is skewed to acidic residues over residues 95–113 (EEDL…EEEA), 169–178 (GEDIDTDEND), and 188–216 (EGDD…EEEE). A disordered region spans residues 95-304 (EEDLEDEEEA…PVEKKEKKQI (210 aa)). Positions 247-257 (KSQKRRLKKKL) are enriched in basic residues. Residues 271–303 (DKPKKEEPQQKAEKKKPEAKKEEAPVEKKEKKQ) show a composition bias toward basic and acidic residues. The 89-residue stretch at 324–412 (GKVVMVYYEG…VFEVDLKNVK (89 aa)) folds into the PPIase FKBP-type domain.

Belongs to the FKBP-type PPIase family. Phosphorylated by a nuclear kinase in the presence of Mg(2+) and ATP.

It is found in the nucleus. It catalyses the reaction [protein]-peptidylproline (omega=180) = [protein]-peptidylproline (omega=0). Inhibited by both FK506 and rapamycin. PPIases accelerate the folding of proteins. It catalyzes the cis-trans isomerization of proline imidic peptide bonds in oligopeptides. Binds double-stranded DNA in vitro. In Spodoptera frugiperda (Fall armyworm), this protein is 46 kDa FK506-binding nuclear protein (FKBP46).